A 151-amino-acid polypeptide reads, in one-letter code: S-ribosylhomocysteine lyase (151 aa).

The Fe cation site is built by His-54, His-58, and Cys-121.

This sequence belongs to the LuxS family. As to quaternary structure, homodimer. Fe cation is required as a cofactor.

The catalysed reaction is S-(5-deoxy-D-ribos-5-yl)-L-homocysteine = (S)-4,5-dihydroxypentane-2,3-dione + L-homocysteine. Functionally, involved in the synthesis of autoinducer 2 (AI-2) which is secreted by bacteria and is used to communicate both the cell density and the metabolic potential of the environment. The regulation of gene expression in response to changes in cell density is called quorum sensing. Catalyzes the transformation of S-ribosylhomocysteine (RHC) to homocysteine (HC) and 4,5-dihydroxy-2,3-pentadione (DPD). In Clostridium perfringens (strain ATCC 13124 / DSM 756 / JCM 1290 / NCIMB 6125 / NCTC 8237 / Type A), this protein is S-ribosylhomocysteine lyase.